The chain runs to 335 residues: Probable calcium-binding protein CML49 (335 aa).

The span at 1–10 shows a compositional bias: low complexity; that stretch reads MSGYPPSSQG. The disordered stretch occupies residues 1-154; sequence MSGYPPSSQG…PQASYGSPFA (154 aa). The span at 30-45 shows a compositional bias: pro residues; that stretch reads NPPPYGSSGSNPPPPY. Residues 46–63 show a composition bias toward low complexity; sequence GSSASSPYAVPYGAQPAP. The span at 110–141 shows a compositional bias: gly residues; sequence DYGGYGGAPQQSGHGGGYGGAPQQSGHGGGYG. 2 EF-hand domains span residues 164–199 and 230–265; these read GTDPNIVACFQAADRDNSGFIDDKELQGALSSYNQS and FSLQNWRSIFERFDKDRSGRIDTNELRDALMSLGFS. Residues D177, D179, S181, E188, D243, D245, S247, R249, and E254 each coordinate Ca(2+).

Potential calcium sensor. The sequence is that of Probable calcium-binding protein CML49 (CML49) from Arabidopsis thaliana (Mouse-ear cress).